The primary structure comprises 466 residues: ATP synthase subunit beta (466 aa).

155–162 is a binding site for ATP; that stretch reads GGAGVGKT.

The protein belongs to the ATPase alpha/beta chains family. F-type ATPases have 2 components, CF(1) - the catalytic core - and CF(0) - the membrane proton channel. CF(1) has five subunits: alpha(3), beta(3), gamma(1), delta(1), epsilon(1). CF(0) has three main subunits: a(1), b(2) and c(9-12). The alpha and beta chains form an alternating ring which encloses part of the gamma chain. CF(1) is attached to CF(0) by a central stalk formed by the gamma and epsilon chains, while a peripheral stalk is formed by the delta and b chains.

It is found in the cell inner membrane. The enzyme catalyses ATP + H2O + 4 H(+)(in) = ADP + phosphate + 5 H(+)(out). Produces ATP from ADP in the presence of a proton gradient across the membrane. The catalytic sites are hosted primarily by the beta subunits. The polypeptide is ATP synthase subunit beta (Bordetella petrii (strain ATCC BAA-461 / DSM 12804 / CCUG 43448)).